Consider the following 608-residue polypeptide: Albumin (608 aa).

An N-terminal signal peptide occupies residues M1–S18. A propeptide spanning residues R19 to R24 is cleaved from the precursor. Albumin domains follow at residues R19–E211, K212–P403, and L404–A601. H27 contacts Cu cation. At S29 the chain carries Phosphoserine. Ca(2+)-binding residues include E30 and D37. C77 and C86 are oxidised to a cystine. 2 positions are modified to phosphoserine: S82 and S89. H91 is a binding site for Zn(2+). Intrachain disulfides connect C99-C115, C114-C125, C148-C193, C192-C201, C224-C270, and C269-C277. A Ca(2+)-binding site is contributed by E268. The Zn(2+) site is built by H271 and D273. Ca(2+) contacts are provided by D273, E276, and D279. Cystine bridges form between C289/C303, C302/C313, C340/C385, C384/C393, C416/C462, C461/C472, C485/C501, and C500/C511. The residue at position 297 (S297) is a Phosphoserine. S443 bears the Phosphoserine mark. Phosphothreonine is present on residues T444 and T446. At K460 the chain carries N6-succinyllysine. A Phosphoserine modification is found at S513. 2 cysteine pairs are disulfide-bonded: C538–C583 and C582–C591. N6-succinyllysine is present on K543. At K558 the chain carries N6-methyllysine. T570 is modified (phosphothreonine). An N6-succinyllysine modification is found at K588.

The protein belongs to the ALB/AFP/VDB family. Interacts with FCGRT; this interaction regulates ALB homeostasis. Interacts with TASOR. In plasma, occurs in a covalently-linked complex with chromophore-bound alpha-1-microglobulin; this interaction does not prevent fatty acid binding to ALB. Plasma.

Its subcellular location is the secreted. In terms of biological role, binds water, Ca(2+), Na(+), K(+), fatty acids, hormones, bilirubin and drugs. Its main function is the regulation of the colloidal osmotic pressure of blood. Major zinc transporter in plasma, typically binds about 80% of all plasma zinc. Major calcium and magnesium transporter in plasma, binds approximately 45% of circulating calcium and magnesium in plasma. Potentially has more than two calcium-binding sites and might additionally bind calcium in a non-specific manner. The shared binding site between zinc and calcium at residue Asp-273 suggests a crosstalk between zinc and calcium transport in the blood. The rank order of affinity is zinc &gt; calcium &gt; magnesium. Binds to the bacterial siderophore enterobactin and inhibits enterobactin-mediated iron uptake of E.coli from ferric transferrin, and may thereby limit the utilization of iron and growth of enteric bacteria such as E.coli. Does not prevent iron uptake by the bacterial siderophore aerobactin. The chain is Albumin from Mesocricetus auratus (Golden hamster).